A 297-amino-acid chain; its full sequence is Protein muscleblind (297 aa).

2 consecutive C3H1-type zinc fingers follow at residues 18-46 and 52-80; these read WLQLEVCREFQRNKCSRQDTECKFAHPPA and NGKVTACYDSIKGRCNRDKPPCKYFHPPQ.

This sequence belongs to the muscleblind family. In terms of tissue distribution, expressed in embryonic muscle cells.

It is found in the nucleus. Functionally, required for terminal differentiation of photoreceptor cells. Vital for embryonic development. This chain is Protein muscleblind (mbl), found in Drosophila melanogaster (Fruit fly).